We begin with the raw amino-acid sequence, 379 residues long: Protein RecA (379 aa).

An ATP-binding site is contributed by 79–86 (GPESSGKT).

It belongs to the RecA family.

The protein resides in the cytoplasm. In terms of biological role, can catalyze the hydrolysis of ATP in the presence of single-stranded DNA, the ATP-dependent uptake of single-stranded DNA by duplex DNA, and the ATP-dependent hybridization of homologous single-stranded DNAs. It interacts with LexA causing its activation and leading to its autocatalytic cleavage. This chain is Protein RecA, found in Streptococcus agalactiae serotype III (strain NEM316).